A 223-amino-acid chain; its full sequence is Adenine phosphoribosyltransferase (223 aa).

Belongs to the purine/pyrimidine phosphoribosyltransferase family. As to quaternary structure, homodimer.

The protein resides in the cytoplasm. It carries out the reaction AMP + diphosphate = 5-phospho-alpha-D-ribose 1-diphosphate + adenine. The protein operates within purine metabolism; AMP biosynthesis via salvage pathway; AMP from adenine: step 1/1. Functionally, catalyzes a salvage reaction resulting in the formation of AMP, that is energically less costly than de novo synthesis. This is Adenine phosphoribosyltransferase from Mycobacterium bovis (strain ATCC BAA-935 / AF2122/97).